A 718-amino-acid chain; its full sequence is Gephyrin (718 aa).

Over residues 1–19 (MSNTLTTERNITNSPTAAQ) the composition is skewed to polar residues. Positions 1 to 26 (MSNTLTTERNITNSPTAAQLNEKESG) are disordered. The MPT Mo-transferase stretch occupies residues 31–176 (EWIVGVLTTS…LPGSVKAIRE (146 aa)). Low complexity predominate over residues 222–244 (NQNNQNNNNNNNNNNNNNNNNNS). 2 disordered regions span residues 222 to 266 (NQNN…SSYN) and 344 to 364 (TGEN…NDDD). Residues 245–254 (HNHHHHHHHS) are compositionally biased toward basic residues. The interval 260–718 (KRGSSYNMTP…KAILIGPINN (459 aa)) is MPT adenylyltransferase.

This sequence in the N-terminal section; belongs to the MoaB/Mog family. The protein in the C-terminal section; belongs to the MoeA family. In terms of assembly, homotrimer, homodimer and homooligomer. The cofactor is Mg(2+).

Its subcellular location is the cell membrane. It is found in the cytoplasm. The protein resides in the cytosol. It localises to the cytoskeleton. It carries out the reaction molybdopterin + ATP + H(+) = adenylyl-molybdopterin + diphosphate. The catalysed reaction is adenylyl-molybdopterin + molybdate = Mo-molybdopterin + AMP + H(+). It functions in the pathway cofactor biosynthesis; molybdopterin biosynthesis. Its function is as follows. Microtubule-associated protein involved in membrane protein-cytoskeleton interactions. Also has a catalytic activity and catalyzes two steps in the biosynthesis of the molybdenum cofactor. In the first step, molybdopterin is adenylated. Subsequently, molybdate is inserted into adenylated molybdopterin and AMP is released. This chain is Gephyrin (gphn), found in Dictyostelium discoideum (Social amoeba).